The chain runs to 564 residues: NAD-dependent malic enzyme (564 aa).

The Proton donor role is filled by Tyr-104. Arg-157 is an NAD(+) binding site. Lys-175 serves as the catalytic Proton acceptor. Positions 246, 247, and 270 each coordinate a divalent metal cation. Residues Asp-270 and Asn-417 each coordinate NAD(+).

The protein belongs to the malic enzymes family. In terms of assembly, homotetramer. Mg(2+) is required as a cofactor. Requires Mn(2+) as cofactor.

It catalyses the reaction (S)-malate + NAD(+) = pyruvate + CO2 + NADH. The catalysed reaction is oxaloacetate + H(+) = pyruvate + CO2. This is NAD-dependent malic enzyme from Aeromonas salmonicida (strain A449).